The sequence spans 125 residues: Insulin growth factor-like family member 3 (125 aa).

An N-terminal signal peptide occupies residues 1-24 (MRPRCCILALVCWITVFLLQCSKG).

The protein belongs to the IGFL family. Detected in the cerebellum.

Its subcellular location is the secreted. Potential ligand of the IGFLR1 cell membrane receptor. The sequence is that of Insulin growth factor-like family member 3 (IGFL3) from Homo sapiens (Human).